We begin with the raw amino-acid sequence, 222 residues long: GTP cyclohydrolase 1 (222 aa).

Residues C111, H114, and C182 each contribute to the Zn(2+) site.

This sequence belongs to the GTP cyclohydrolase I family. As to quaternary structure, toroid-shaped homodecamer, composed of two pentamers of five dimers.

The catalysed reaction is GTP + H2O = 7,8-dihydroneopterin 3'-triphosphate + formate + H(+). It participates in cofactor biosynthesis; 7,8-dihydroneopterin triphosphate biosynthesis; 7,8-dihydroneopterin triphosphate from GTP: step 1/1. This Citrobacter koseri (strain ATCC BAA-895 / CDC 4225-83 / SGSC4696) protein is GTP cyclohydrolase 1.